The chain runs to 183 residues: ATP synthase subunit b, chloroplastic (183 aa).

The chain crosses the membrane as a helical span at residues 25-45 (DILATNLINLTVVVGVLIFFG).

The protein belongs to the ATPase B chain family. As to quaternary structure, F-type ATPases have 2 components, F(1) - the catalytic core - and F(0) - the membrane proton channel. F(1) has five subunits: alpha(3), beta(3), gamma(1), delta(1), epsilon(1). F(0) has four main subunits: a(1), b(1), b'(1) and c(10-14). The alpha and beta chains form an alternating ring which encloses part of the gamma chain. F(1) is attached to F(0) by a central stalk formed by the gamma and epsilon chains, while a peripheral stalk is formed by the delta, b and b' chains.

Its subcellular location is the plastid. It localises to the chloroplast thylakoid membrane. Functionally, f(1)F(0) ATP synthase produces ATP from ADP in the presence of a proton or sodium gradient. F-type ATPases consist of two structural domains, F(1) containing the extramembraneous catalytic core and F(0) containing the membrane proton channel, linked together by a central stalk and a peripheral stalk. During catalysis, ATP synthesis in the catalytic domain of F(1) is coupled via a rotary mechanism of the central stalk subunits to proton translocation. Component of the F(0) channel, it forms part of the peripheral stalk, linking F(1) to F(0). The sequence is that of ATP synthase subunit b, chloroplastic from Zea mays (Maize).